A 332-amino-acid chain; its full sequence is Holliday junction branch migration complex subunit RuvB (332 aa).

The tract at residues 1–182 (MNKNFIESNL…FAFTCRLEYY (182 aa)) is large ATPase domain (RuvB-L). Residues Leu-21, Arg-22, Gly-63, Lys-66, Thr-67, Thr-68, 129–131 (EDF), Arg-172, Tyr-182, and Arg-219 each bind ATP. Residue Thr-67 coordinates Mg(2+). Residues 183–253 (DPMILQKILL…VANRALTMLS (71 aa)) form a small ATPAse domain (RuvB-S) region. The head domain (RuvB-H) stretch occupies residues 256 to 332 (EKGLDEMDKK…YQHIVGSSQR (77 aa)). Arg-311 and Arg-316 together coordinate DNA.

The protein belongs to the RuvB family. In terms of assembly, homohexamer. Forms an RuvA(8)-RuvB(12)-Holliday junction (HJ) complex. HJ DNA is sandwiched between 2 RuvA tetramers; dsDNA enters through RuvA and exits via RuvB. An RuvB hexamer assembles on each DNA strand where it exits the tetramer. Each RuvB hexamer is contacted by two RuvA subunits (via domain III) on 2 adjacent RuvB subunits; this complex drives branch migration. In the full resolvosome a probable DNA-RuvA(4)-RuvB(12)-RuvC(2) complex forms which resolves the HJ.

The protein resides in the cytoplasm. The catalysed reaction is ATP + H2O = ADP + phosphate + H(+). Functionally, the RuvA-RuvB-RuvC complex processes Holliday junction (HJ) DNA during genetic recombination and DNA repair, while the RuvA-RuvB complex plays an important role in the rescue of blocked DNA replication forks via replication fork reversal (RFR). RuvA specifically binds to HJ cruciform DNA, conferring on it an open structure. The RuvB hexamer acts as an ATP-dependent pump, pulling dsDNA into and through the RuvAB complex. RuvB forms 2 homohexamers on either side of HJ DNA bound by 1 or 2 RuvA tetramers; 4 subunits per hexamer contact DNA at a time. Coordinated motions by a converter formed by DNA-disengaged RuvB subunits stimulates ATP hydrolysis and nucleotide exchange. Immobilization of the converter enables RuvB to convert the ATP-contained energy into a lever motion, pulling 2 nucleotides of DNA out of the RuvA tetramer per ATP hydrolyzed, thus driving DNA branch migration. The RuvB motors rotate together with the DNA substrate, which together with the progressing nucleotide cycle form the mechanistic basis for DNA recombination by continuous HJ branch migration. Branch migration allows RuvC to scan DNA until it finds its consensus sequence, where it cleaves and resolves cruciform DNA. This is Holliday junction branch migration complex subunit RuvB from Protochlamydia amoebophila (strain UWE25).